The sequence spans 270 residues: 4-hydroxy-tetrahydrodipicolinate reductase (270 aa).

G7 to M12 contacts NAD(+). NADP(+) is bound at residue R34. NAD(+) is bound by residues G97–T99 and S121–M124. H155 serves as the catalytic Proton donor/acceptor. H156 provides a ligand contact to (S)-2,3,4,5-tetrahydrodipicolinate. K159 acts as the Proton donor in catalysis. Residue G165–T166 participates in (S)-2,3,4,5-tetrahydrodipicolinate binding.

It belongs to the DapB family.

It localises to the cytoplasm. It catalyses the reaction (S)-2,3,4,5-tetrahydrodipicolinate + NAD(+) + H2O = (2S,4S)-4-hydroxy-2,3,4,5-tetrahydrodipicolinate + NADH + H(+). The catalysed reaction is (S)-2,3,4,5-tetrahydrodipicolinate + NADP(+) + H2O = (2S,4S)-4-hydroxy-2,3,4,5-tetrahydrodipicolinate + NADPH + H(+). It participates in amino-acid biosynthesis; L-lysine biosynthesis via DAP pathway; (S)-tetrahydrodipicolinate from L-aspartate: step 4/4. Functionally, catalyzes the conversion of 4-hydroxy-tetrahydrodipicolinate (HTPA) to tetrahydrodipicolinate. This Bartonella quintana (strain Toulouse) (Rochalimaea quintana) protein is 4-hydroxy-tetrahydrodipicolinate reductase.